The sequence spans 264 residues: tRNA pseudouridine synthase A (264 aa).

Asp-51 (nucleophile) is an active-site residue. Tyr-109 provides a ligand contact to substrate.

This sequence belongs to the tRNA pseudouridine synthase TruA family. As to quaternary structure, homodimer.

It catalyses the reaction uridine(38/39/40) in tRNA = pseudouridine(38/39/40) in tRNA. Functionally, formation of pseudouridine at positions 38, 39 and 40 in the anticodon stem and loop of transfer RNAs. The protein is tRNA pseudouridine synthase A of Vibrio atlanticus (strain LGP32) (Vibrio splendidus (strain Mel32)).